Reading from the N-terminus, the 685-residue chain is Tripartite terminase subunit 1 (685 aa).

The C3H1-type zinc finger occupies 173-201 (CWRCVGELMVLPNHGNPSTAEGTHVSCNH). Disordered regions lie at residues 231–254 (EEKA…EAEG) and 394–423 (LGRG…SGAL). Residues 395 to 407 (GRGEEEASRESPE) show a composition bias toward basic and acidic residues. 619 to 626 (YNKTWGRS) serves as a coordination point for ATP.

The protein belongs to the herpesviridae TRM1 protein family. As to quaternary structure, associates with TRM2 and TRM3 to form the tripartite terminase complex. Interacts with portal protein.

The protein localises to the host nucleus. Component of the molecular motor that translocates viral genomic DNA in empty capsid during DNA packaging. Forms a tripartite terminase complex together with TRM2 and TRM3 in the host cytoplasm. Once the complex reaches the host nucleus, it interacts with the capsid portal vertex. This portal forms a ring in which genomic DNA is translocated into the capsid. TRM1 carries an endonuclease activity that plays an important role for the cleavage of concatemeric viral DNA into unit length genomes. This Epstein-Barr virus (strain B95-8) (HHV-4) protein is Tripartite terminase subunit 1.